The following is a 77-amino-acid chain: Protein AC43 (77 aa).

Functionally, plays a role in the production of occlusion bodies as well as expression of the polyhedrin gene. The sequence is that of Protein AC43 from Autographa californica nuclear polyhedrosis virus (AcMNPV).